We begin with the raw amino-acid sequence, 451 residues long: MFAENLTRIGSNVAGLFFVWSTLKRYFPRQIQQLLFNAIQRIPIFKRLSDKILEFFSPYAYIRFREIEGYRYNYAFAAVKTYLGAKVNSEVKNLKGNQVKENMSLDLKRDDVKIEEEYEGVKMWWEIFRCVKGKKICRLTFHRSNWDVVTGSYLRYVVEEGKSIKARKKKVMVLMNNPSLNWKTSMKGLWTCTEFEHPATFDTLAMDIDKKDEIFRDLVAFRDGKEYYDRIGKAWKRGYLLYGPPGTGKSTMIAAMANLMKYNIYDLELTSIGNNWELKKLLIATTNKSIIVIEDIDCSLDLTGEREVKDLKGDKEGKKSNAVTLSGLLNFIDGIWSACGQERILVFTTNHVGKLDQALIRRGRMDMHIELSYCTFGAFKILAKNYLNIDSHHLFGEIESLLKETKITPADVAEHMMAKEVDGSLKGLIRALERIKWSQNVKVEEQLQQGD.

The transit peptide at 1-48 directs the protein to the mitochondrion; that stretch reads MFAENLTRIGSNVAGLFFVWSTLKRYFPRQIQQLLFNAIQRIPIFKRL. 243 to 250 lines the ATP pocket; sequence GPPGTGKS.

It belongs to the AAA ATPase family. BCS1 subfamily. Mg(2+) serves as cofactor.

Its subcellular location is the mitochondrion. The catalysed reaction is ATP + H2O = ADP + phosphate + H(+). The chain is AAA-ATPase At3g28570, mitochondrial from Arabidopsis thaliana (Mouse-ear cress).